Reading from the N-terminus, the 498-residue chain is Heat stress transcription factor A-3 (498 aa).

A disordered region spans residues 156–180; it reads RRRSSPTQQSGLQPGSSGESGLDPE. Over residues 160–174 the composition is skewed to polar residues; the sequence is SPTQQSGLQPGSSGE. Positions 180-235 form a coiled coil; it reads ELNTLRREKSALLQEVTRLKQEHLQTIEQMSTLNQRLESAEDRQKQMVSFLAKLLQ. Residues 184 to 234 are hydrophobic repeat HR-A/B; that stretch reads LRREKSALLQEVTRLKQEHLQTIEQMSTLNQRLESAEDRQKQMVSFLAKLL. Residues 258–263 carry the Nuclear localization signal motif; the sequence is KRKFLK. The segment at 263–291 is disordered; that stretch reads KHVPHGNIDSGESSSQHTGESNLDFSPTS. Polar residues predominate over residues 272–291; sequence SGESSSQHTGESNLDFSPTS. Positions 309-316 match the Nuclear export signal motif; sequence LEDGDLNL. Positions 356–382 are disordered; the sequence is LEIPPASGPRGQDPTIGRSKGKNVLSP.

It belongs to the HSF family. Class A subfamily. In terms of assembly, homotrimer. In terms of processing, exhibits temperature-dependent phosphorylation.

Its subcellular location is the cytoplasm. The protein resides in the nucleus. In terms of biological role, transcriptional regulator that specifically binds DNA of heat shock promoter elements (HSE). This is Heat stress transcription factor A-3 (HSFA3) from Oryza sativa subsp. japonica (Rice).